We begin with the raw amino-acid sequence, 207 residues long: N-(5'-phosphoribosyl)anthranilate isomerase (207 aa).

This sequence belongs to the TrpF family.

The catalysed reaction is N-(5-phospho-beta-D-ribosyl)anthranilate = 1-(2-carboxyphenylamino)-1-deoxy-D-ribulose 5-phosphate. The protein operates within amino-acid biosynthesis; L-tryptophan biosynthesis; L-tryptophan from chorismate: step 3/5. In Legionella pneumophila (strain Lens), this protein is N-(5'-phosphoribosyl)anthranilate isomerase.